Consider the following 185-residue polypeptide: Homeobox protein TGIF2LY (185 aa).

Disordered regions lie at residues 1–58 and 166–185; these read MEAA…GNLP and RCQE…SSPE. Polar residues predominate over residues 21–39; sequence AKTQSPAQDTSIMSRNNAD. A DNA-binding region (homeobox; TALE-type) is located at residues 48–111; the sequence is EHKKKRKGNL…INARRRILPD (64 aa).

It belongs to the TALE/TGIF homeobox family. In terms of tissue distribution, specifically expressed in adult testis.

The protein localises to the nucleus. Its function is as follows. May have a transcription role in testis. May act as a competitor/regulator of TGIF2LX. The protein is Homeobox protein TGIF2LY (TGIF2LY) of Homo sapiens (Human).